A 926-amino-acid polypeptide reads, in one-letter code: MAASPNPLQGSLFEESKQSTTNGGKETNNSIGSSENLSNQQLKSDASLRPRIRKTSKNPNQINDLDQLSNAEIEEPKWSHHNLPKIDDLTPALKHYVQLKIENPDRVLLYRLGDFFECFFEDAITLSQLLEITLTSKEGGKKIGKVPMAGIPHHASDRYCTELIKKGLSIAICDQLEAAPSKGNKLIKRGITRLITPGTIIEEGMLSAKQNNWLASVLLESDSNSDFVNWSLAKLDVSTGEFLVQEGKETNNLRQELIKLKAAEVISESKSISNQNWYKGLIEITEFNQTSFSRLEAKTTIENHYFLNNIDGLGIHPESLSIRTIGGLIAYLNKTHPNIGNNLKNEVKTNICIDFPQIKHNQAGLIIDNQTRRNLEITSTQKNGQFQGSLLWAIDKTLTAMGGRCIRRWLEEPLTEIYSIQSRQKIIGLLVESSSLRKNIRKILRAMGDLERLSGRAGAQQAGARDLIAIAEGINRLPLIKKYLNDPIFEETKYFESIINLDRDLIELASKINNEIIDNPPLSLTEGGLIFDGVNPILDGLRNQLDDHNSWLKSQEIEERKNSNINNLKLQYHRSFGYFLAVSKAKSINVPDHWIRRQTLTNEERFVTPELKEREGKIFQLRARISQLEYDLFCKLRILVGNKSDIIRKAAKAISCLDVLSGLAELAATNNYIQPKIIDNKDSTKTRRLSIVDGRHPVVEQILVDKFFVPNDIELGSKTDLIILSGPNASGKSCYLRQVGLLQIMAQIGSWIPAKSANIGIADQLFTRVGAVDDLASGQSTFMVEMIETAFILNNATENSLVLLDEIGRGTSTFDGLSIAWSVSEFLAKKIKSRSIFATHYHELNQISEYIENVENYKVVVEYKNHSLSFLHKVEKGGANKSYGIEAARLAGVPPDVVNNARLILKNLEKNNSNTIQITKPIESCK.

Positions 1-67 are disordered; it reads MAASPNPLQG…NPNQINDLDQ (67 aa). Polar residues-rich tracts occupy residues 18-44 and 57-67; these read QSTT…QLKS and KNPNQINDLDQ. An ATP-binding site is contributed by 726-733; the sequence is GPNASGKS.

It belongs to the DNA mismatch repair MutS family.

In terms of biological role, this protein is involved in the repair of mismatches in DNA. It is possible that it carries out the mismatch recognition step. This protein has a weak ATPase activity. The sequence is that of DNA mismatch repair protein MutS from Prochlorococcus marinus (strain NATL1A).